The chain runs to 201 residues: Peptide deformylase (201 aa).

Residues 1–24 (MANHFSQLAKKSKTNGNSEKIAKE) are disordered. Residues C121 and H163 each contribute to the Fe cation site. Residue E164 is part of the active site. Residue H167 participates in Fe cation binding.

The protein belongs to the polypeptide deformylase family. Fe(2+) is required as a cofactor.

The catalysed reaction is N-terminal N-formyl-L-methionyl-[peptide] + H2O = N-terminal L-methionyl-[peptide] + formate. Functionally, removes the formyl group from the N-terminal Met of newly synthesized proteins. Requires at least a dipeptide for an efficient rate of reaction. N-terminal L-methionine is a prerequisite for activity but the enzyme has broad specificity at other positions. In Prochlorococcus marinus (strain MIT 9312), this protein is Peptide deformylase.